A 547-amino-acid chain; its full sequence is Myrosinase 2 (547 aa).

The first 28 residues, 1–28, serve as a signal peptide directing secretion; sequence MQHNTYIYILTMKLLGFALAILLVVATC. 3 disulfide bridges follow: Cys36-Cys460, Cys44-Cys456, and Cys236-Cys244. A beta-D-glucoside is bound by residues Gln69, His171, and 216–217; that span reads NQ. Asn340 is a glycosylation site (N-linked (GlcNAc...) asparagine). Tyr359 contacts a beta-D-glucoside. Asn384 is a glycosylation site (N-linked (GlcNAc...) asparagine). A beta-D-glucoside contacts are provided by residues Glu430, Trp479, 486 to 487, and Phe495; that span reads EF. Glu430 (nucleophile) is an active-site residue. The N-linked (GlcNAc...) asparagine glycan is linked to Asn504.

It belongs to the glycosyl hydrolase 1 family. In terms of assembly, interacts with MVP1. In terms of tissue distribution, expressed in phloem-associated cells.

The catalysed reaction is a thioglucoside + H2O = a sugar + a thiol.. In terms of biological role, may degrade glucosinolates (glucose residue linked by a thioglucoside bound to an amino acid derivative) to glucose, sulfate and any of the products: thiocyanates, isothiocyanates, nitriles, epithionitriles or oxazolidine-2-thiones. These toxic degradation products can deter insect herbivores. Seems to function in abscisic acid (ABA) and methyl jasmonate (MeJA) signaling in guard cells. Functionally redundant with TGG1. This chain is Myrosinase 2, found in Arabidopsis thaliana (Mouse-ear cress).